A 683-amino-acid chain; its full sequence is Zinc finger protein 510 (683 aa).

The KRAB domain occupies 46 to 117 (VSFKDVTIEF…EEEFSNQSHP (72 aa)). The C2H2-type 1; degenerate zinc finger occupies 254–276 (FECNKIGKAFNDKANCVKHNSSH). C2H2-type zinc fingers lie at residues 404–426 (YKCN…QRTH), 432–454 (FECS…QRIH), 460–482 (YKCN…QRIH), 488–510 (YECS…HRIH), 516–538 (FQCN…QRTH), 544–566 (YQCN…QKTH), 572–594 (FKCN…QRIH), 600–622 (FKCN…QRIH), and 628–650 (FQCN…QRTH).

The protein belongs to the krueppel C2H2-type zinc-finger protein family.

Its subcellular location is the nucleus. Its function is as follows. May be involved in transcriptional regulation. This is Zinc finger protein 510 (ZNF510) from Homo sapiens (Human).